A 728-amino-acid polypeptide reads, in one-letter code: FYN-binding protein 2 (728 aa).

3 disordered regions span residues 17 to 76, 250 to 287, and 367 to 390; these read QNLD…PLQP, QAPE…RPPI, and PGKN…EKQP. Residues 42–75 are compositionally biased toward polar residues; sequence GTQSTQILANGKPLSSNHKQRTPYCSSSESQPLQ. A compositionally biased stretch (pro residues) spans 276 to 285; it reads GPPPPKPSRP. Over residues 377 to 390 the composition is skewed to basic and acidic residues; the sequence is SAKHEDKKMKEKQP. Tyr-491 carries the phosphotyrosine modification. The short motif at 521 to 524 is the SH2-binding; to LCP2 element; it reads YEDV. Tyr-587 carries the phosphotyrosine modification. An SH3 domain is found at 664–724; it reads IVINTAVACS…LIEHLDFKHQ (61 aa).

As to quaternary structure, interacts with SKAP1, LCK and FYN. The phosphorylated form interacts with LCP2. Post-translationally, phosphorylation is required for its function in T-cell activation. Expressed in T-cells (at protein level). Widely expressed.

The protein localises to the membrane raft. Adapter protein that plays a role in T-cell receptor (TCR)-mediated activation of signaling pathways. Required for T-cell activation and integrin-mediated T-cell adhesion in response to TCR stimulation. The sequence is that of FYN-binding protein 2 from Homo sapiens (Human).